The chain runs to 348 residues: Protein RecA (348 aa).

69–76 (GPESSGKT) lines the ATP pocket.

It belongs to the RecA family.

It localises to the cytoplasm. Its function is as follows. Can catalyze the hydrolysis of ATP in the presence of single-stranded DNA, the ATP-dependent uptake of single-stranded DNA by duplex DNA, and the ATP-dependent hybridization of homologous single-stranded DNAs. It interacts with LexA causing its activation and leading to its autocatalytic cleavage. This Gluconacetobacter polyoxogenes (Acetobacter polyoxogenes) protein is Protein RecA.